Consider the following 138-residue polypeptide: Ribulose bisphosphate carboxylase small subunit (138 aa).

The protein belongs to the RuBisCO small chain family. Heterohexadecamer of 8 large and 8 small subunits.

Its subcellular location is the plastid. The protein resides in the chloroplast. RuBisCO catalyzes two reactions: the carboxylation of D-ribulose 1,5-bisphosphate, the primary event in carbon dioxide fixation, as well as the oxidative fragmentation of the pentose substrate in the photorespiration process. Both reactions occur simultaneously and in competition at the same active site. Although the small subunit is not catalytic it is essential for maximal activity. The sequence is that of Ribulose bisphosphate carboxylase small subunit from Cyanidium caldarium (Red alga).